The primary structure comprises 308 residues: Probable D,D-dipeptide transport ATP-binding protein DdpF (308 aa).

One can recognise an ABC transporter domain in the interval L8–L243. G49 to S56 is an ATP binding site.

The protein belongs to the ABC transporter superfamily. As to quaternary structure, the complex is composed of two ATP-binding proteins (DdpD and DdpF), two transmembrane proteins (DdpB and DdpC) and a solute-binding protein (DdpA).

Its subcellular location is the cell inner membrane. Its function is as follows. Part of the ABC transporter complex DdpABCDF, which is probably involved in D,D-dipeptide transport. Probably responsible for energy coupling to the transport system. The polypeptide is Probable D,D-dipeptide transport ATP-binding protein DdpF (Escherichia coli (strain K12)).